Consider the following 1079-residue polypeptide: Translation initiation factor IF-2 (1079 aa).

3 stretches are compositionally biased toward basic and acidic residues: residues 52-65, 75-90, and 102-134; these read VQAQ…KEGN, RDGD…KAPE, and APER…KEPQ. Residues 52 to 488 are disordered; sequence VQAQRDGGAR…RGKKDVRPAA (437 aa). Residues 150–184 show a composition bias toward low complexity; that stretch reads APVAKVVEAAPAETPAPEAPAVKATVTAEAAPAKT. Over residues 185-194 the composition is skewed to basic and acidic residues; that stretch reads VEPESERPQA. Positions 276–291 are enriched in low complexity; it reads AAVAQQQMQQQAAQQQ. Residues 306–327 show a composition bias toward basic and acidic residues; the sequence is GGYRPEGQREGGYRPEGQREGG. 2 stretches are compositionally biased toward low complexity: residues 348–370 and 380–398; these read EGGY…GPRP and PGAP…APRP. Positions 419 to 429 are enriched in gly residues; the sequence is PRPGGFGGAPG. Basic and acidic residues predominate over residues 461–471; the sequence is PRGRSDDDVMR. Basic residues predominate over residues 473-482; sequence PRGRGKRGKK. The 168-residue stretch at 578 to 745 folds into the tr-type G domain; it reads TRPPVVTIMG…LIAIQAEILE (168 aa). The segment at 587–594 is G1; that stretch reads GHVDHGKT. GTP is bound at residue 587–594; that stretch reads GHVDHGKT. A G2 region spans residues 612-616; the sequence is GITQH. The interval 633–636 is G3; sequence DTPG. GTP contacts are provided by residues 633–637 and 687–690; these read DTPGH and NKMD. Positions 687-690 are G4; that stretch reads NKMD. Positions 723 to 725 are G5; that stretch reads SAK.

Belongs to the TRAFAC class translation factor GTPase superfamily. Classic translation factor GTPase family. IF-2 subfamily.

It localises to the cytoplasm. Its function is as follows. One of the essential components for the initiation of protein synthesis. Protects formylmethionyl-tRNA from spontaneous hydrolysis and promotes its binding to the 30S ribosomal subunits. Also involved in the hydrolysis of GTP during the formation of the 70S ribosomal complex. In Nitratidesulfovibrio vulgaris (strain ATCC 29579 / DSM 644 / CCUG 34227 / NCIMB 8303 / VKM B-1760 / Hildenborough) (Desulfovibrio vulgaris), this protein is Translation initiation factor IF-2.